A 344-amino-acid polypeptide reads, in one-letter code: HTH-type transcriptional repressor MelR (344 aa).

The 57-residue stretch at 2–58 (VRIKDIALKAKVSSATVSRILNEDESLSVAGETRQRVINIAEELGYQTVAKRRKSRG) folds into the HTH lacI-type domain. Positions 4-23 (IKDIALKAKVSSATVSRILN) form a DNA-binding region, H-T-H motif.

It is found in the cytoplasm. Represses the melibiose operon melREDCA in the absence of melibiose or raffinose. Binds to two binding sites at the promoter region of the operon. This chain is HTH-type transcriptional repressor MelR, found in Bacillus subtilis (strain 168).